We begin with the raw amino-acid sequence, 214 residues long: Thymidylate kinase (214 aa).

Position 7-14 (7-14) interacts with ATP; that stretch reads GIDGAGKS.

Belongs to the thymidylate kinase family.

It carries out the reaction dTMP + ATP = dTDP + ADP. In terms of biological role, phosphorylation of dTMP to form dTDP in both de novo and salvage pathways of dTTP synthesis. The polypeptide is Thymidylate kinase (Chlorobium luteolum (strain DSM 273 / BCRC 81028 / 2530) (Pelodictyon luteolum)).